The sequence spans 85 residues: Large ribosomal subunit protein bL27 (85 aa).

The interval 1–20 (MATKKAGGSTRNGRDSEAKR) is disordered.

The protein belongs to the bacterial ribosomal protein bL27 family.

This is Large ribosomal subunit protein bL27 from Haemophilus influenzae (strain PittEE).